Consider the following 118-residue polypeptide: Elicitin (118 aa).

The first 20 residues, 1 to 20, serve as a signal peptide directing secretion; the sequence is MNFRALFAATVAALVGSTSA. 3 disulfide bridges follow: Cys23/Cys91, Cys47/Cys76, and Cys71/Cys115.

The protein belongs to the elicitin family.

It is found in the secreted. In terms of biological role, induces local and distal defense responses (incompatible hypersensitive reaction) in plants from the solanaceae and cruciferae families. Elicits leaf necrosis and causes the accumulation of pathogenesis-related proteins. Might interact with the lipidic molecules of the plasma membrane. The polypeptide is Elicitin (PARA1) (Phytophthora nicotianae (Potato buckeye rot agent)).